The chain runs to 314 residues: tRNA-cytidine(32) 2-sulfurtransferase (314 aa).

The short motif at 53–58 (SGGKDS) is the PP-loop motif element. Positions 128, 131, and 219 each coordinate [4Fe-4S] cluster.

Belongs to the TtcA family. As to quaternary structure, homodimer. The cofactor is Mg(2+). Requires [4Fe-4S] cluster as cofactor.

The protein localises to the cytoplasm. It catalyses the reaction cytidine(32) in tRNA + S-sulfanyl-L-cysteinyl-[cysteine desulfurase] + AH2 + ATP = 2-thiocytidine(32) in tRNA + L-cysteinyl-[cysteine desulfurase] + A + AMP + diphosphate + H(+). Its pathway is tRNA modification. Functionally, catalyzes the ATP-dependent 2-thiolation of cytidine in position 32 of tRNA, to form 2-thiocytidine (s(2)C32). The sulfur atoms are provided by the cysteine/cysteine desulfurase (IscS) system. The protein is tRNA-cytidine(32) 2-sulfurtransferase of Colwellia psychrerythraea (strain 34H / ATCC BAA-681) (Vibrio psychroerythus).